The following is a 211-amino-acid chain: Putative ankyrin repeat protein R810 (211 aa).

ANK repeat units lie at residues T31–Y61, N72–A101, Q103–G131, Y133–E162, and M163–D191.

The sequence is that of Putative ankyrin repeat protein R810 from Acanthamoeba polyphaga mimivirus (APMV).